A 980-amino-acid polypeptide reads, in one-letter code: Alanine--tRNA ligase, mitochondrial (980 aa).

The transit peptide at 1–23 (MAVALAAAAGKLRRAIGRSCPWQ) directs the protein to the mitochondrion. ATP-binding positions include arginine 105, histidine 123, tryptophan 205, and 235–237 (LWN). Residues asparagine 237 and aspartate 260 each contribute to the L-alanine site. Glycine 264 is an ATP binding site. The Zn(2+) site is built by histidine 627, histidine 631, cysteine 744, and histidine 748.

It belongs to the class-II aminoacyl-tRNA synthetase family. As to quaternary structure, monomer. It depends on Zn(2+) as a cofactor.

Its subcellular location is the mitochondrion. It carries out the reaction tRNA(Ala) + L-alanine + ATP = L-alanyl-tRNA(Ala) + AMP + diphosphate. The enzyme catalyses (S)-lactate + ATP + H(+) = (S)-lactoyl-AMP + diphosphate. It catalyses the reaction (S)-lactoyl-AMP + L-lysyl-[protein] = N(6)-[(S)-lactoyl]-L-lysyl-[protein] + AMP + 2 H(+). Functionally, catalyzes the attachment of alanine to tRNA(Ala) in a two-step reaction: alanine is first activated by ATP to form Ala-AMP and then transferred to the acceptor end of tRNA(Ala). Also edits incorrectly charged tRNA(Ala) via its editing domain. In presence of high levels of lactate, also acts as a protein lactyltransferase that mediates lactylation of lysine residues in target proteins, such as CGAS. Acts as an inhibitor of cGAS/STING signaling by catalyzing lactylation of CGAS, preventing the formation of liquid-like droplets in which CGAS is activated. The chain is Alanine--tRNA ligase, mitochondrial (Aars2) from Mus musculus (Mouse).